The chain runs to 184 residues: Cytidylate kinase (184 aa).

Position 8–16 (8–16 (GQPGSGKTT)) interacts with ATP.

This sequence belongs to the cytidylate kinase family. Type 2 subfamily.

It is found in the cytoplasm. The catalysed reaction is CMP + ATP = CDP + ADP. The enzyme catalyses dCMP + ATP = dCDP + ADP. This is Cytidylate kinase from Pyrobaculum islandicum (strain DSM 4184 / JCM 9189 / GEO3).